The following is a 221-amino-acid chain: Phosphate-specific transport system accessory protein PhoU homolog 1 (221 aa).

The protein belongs to the PhoU family. As to quaternary structure, homodimer.

Its subcellular location is the cytoplasm. Functionally, plays a role in the regulation of phosphate uptake. In this role, it may bind, possibly as a chaperone, to PhoR, PhoP or a PhoR-PhoP complex to promote dephosphorylation of phospho-PhoP, or inhibit formation of the PhoR-PhoP transitory complex. This chain is Phosphate-specific transport system accessory protein PhoU homolog 1 (phoU1), found in Mycobacterium bovis (strain ATCC BAA-935 / AF2122/97).